A 733-amino-acid chain; its full sequence is Probable Rho-GTPase-activating protein 6 (733 aa).

Residues 116–125 are compositionally biased toward polar residues; sequence VFNESKSSSP. The disordered stretch occupies residues 116 to 135; the sequence is VFNESKSSSPPDAHTDKYFT. A Phosphothreonine modification is found at threonine 141. A disordered region spans residues 174–256; sequence RFDKPSNNGP…SKGSWSSILR (83 aa). The segment covering 179 to 195 has biased composition (low complexity); that stretch reads SNNGPLGRSSLNLSSLS. Polar residues-rich tracts occupy residues 196-218 and 225-240; these read HELQTSQDSPSLSATNQLSSSDT and PPSSFGSQRQFNASQD. Positions 312–546 constitute a Rho-GAP domain; it reads TNLCKFTFPT…GLIIHWPEVL (235 aa). The segment at 692-713 is disordered; sequence PVTVTASSETNKKSQKINKKAS. A compositionally biased stretch (basic residues) spans 704 to 713; sequence KSQKINKKAS.

This chain is Probable Rho-GTPase-activating protein 6 (rga6), found in Schizosaccharomyces pombe (strain 972 / ATCC 24843) (Fission yeast).